A 256-amino-acid chain; its full sequence is Glycerol-3-phosphate acyltransferase (256 aa).

Transmembrane regions (helical) follow at residues 2 to 22 (FPYL…SVLW), 58 to 78 (LAVA…AIGL), 90 to 110 (SYFI…WFKF), 123 to 143 (LIVV…IFAF), 153 to 173 (IIGT…GVMG), and 211 to 231 (FADG…ILVV).

The protein belongs to the PlsY family. Probably interacts with PlsX.

The protein localises to the cell membrane. The enzyme catalyses an acyl phosphate + sn-glycerol 3-phosphate = a 1-acyl-sn-glycero-3-phosphate + phosphate. It participates in lipid metabolism; phospholipid metabolism. Functionally, catalyzes the transfer of an acyl group from acyl-phosphate (acyl-PO(4)) to glycerol-3-phosphate (G3P) to form lysophosphatidic acid (LPA). This enzyme utilizes acyl-phosphate as fatty acyl donor, but not acyl-CoA or acyl-ACP. The chain is Glycerol-3-phosphate acyltransferase from Mesoplasma florum (strain ATCC 33453 / NBRC 100688 / NCTC 11704 / L1) (Acholeplasma florum).